A 139-amino-acid chain; its full sequence is MGKRFSSFQAAQIRIARPTGQLDEIIRFYEEGLCLKRIGEFSQHNGYDGVMFGLPHADYHLEFTQYEGGSTAPVPHPDSLLVFYVPNAVELAAITSKLKHMGYQEVESENPYWSNGGVTIEDPDGWRIVFMNSKGISGK.

Residues 9–133 (QAAQIRIARP…DGWRIVFMNS (125 aa)) form the VOC domain.

This is an uncharacterized protein from Bacillus subtilis (strain 168).